The chain runs to 465 residues: Glutamate--tRNA ligase (465 aa).

The 'HIGH' region signature appears at 8–18 (PSPTGHLHIGG). Zn(2+)-binding residues include Cys97, Cys99, Cys124, and Glu126. The 'KMSKS' region motif lies at 234–238 (RLSKR). Residue Lys237 participates in ATP binding.

The protein belongs to the class-I aminoacyl-tRNA synthetase family. Glutamate--tRNA ligase type 1 subfamily. As to quaternary structure, monomer. It depends on Zn(2+) as a cofactor.

It localises to the cytoplasm. The catalysed reaction is tRNA(Glu) + L-glutamate + ATP = L-glutamyl-tRNA(Glu) + AMP + diphosphate. Its function is as follows. Catalyzes the attachment of glutamate to tRNA(Glu) in a two-step reaction: glutamate is first activated by ATP to form Glu-AMP and then transferred to the acceptor end of tRNA(Glu). The protein is Glutamate--tRNA ligase of Thermodesulfovibrio yellowstonii (strain ATCC 51303 / DSM 11347 / YP87).